We begin with the raw amino-acid sequence, 233 residues long: Octanoyltransferase (233 aa).

A BPL/LPL catalytic domain is found at 38–218 (AGGPDTLLLL…LVCDALDGVL (181 aa)). The segment covering 57 to 66 (RRTEPHERPL) has biased composition (basic and acidic residues). Residues 57-77 (RRTEPHERPLDGTPVVDTDRG) form a disordered region. Substrate is bound by residues 76–83 (RGGKITWH), 148–150 (AIG), and 161–163 (GFA). Cys179 (acyl-thioester intermediate) is an active-site residue.

The protein belongs to the LipB family.

The protein resides in the cytoplasm. It catalyses the reaction octanoyl-[ACP] + L-lysyl-[protein] = N(6)-octanoyl-L-lysyl-[protein] + holo-[ACP] + H(+). The protein operates within protein modification; protein lipoylation via endogenous pathway; protein N(6)-(lipoyl)lysine from octanoyl-[acyl-carrier-protein]: step 1/2. Functionally, catalyzes the transfer of endogenously produced octanoic acid from octanoyl-acyl-carrier-protein onto the lipoyl domains of lipoate-dependent enzymes. Lipoyl-ACP can also act as a substrate although octanoyl-ACP is likely to be the physiological substrate. This is Octanoyltransferase from Mycobacterium avium (strain 104).